The sequence spans 202 residues: dITP/XTP pyrophosphatase (202 aa).

Residue 8–13 coordinates substrate; it reads TKNMGK. Mg(2+) is bound by residues E41 and D70. Residue D70 is the Proton acceptor of the active site. Substrate is bound by residues S71, 155 to 158, K178, and 183 to 184; these read FGYD and HR.

This sequence belongs to the HAM1 NTPase family. In terms of assembly, homodimer. Mg(2+) is required as a cofactor.

The catalysed reaction is XTP + H2O = XMP + diphosphate + H(+). It catalyses the reaction dITP + H2O = dIMP + diphosphate + H(+). The enzyme catalyses ITP + H2O = IMP + diphosphate + H(+). Pyrophosphatase that catalyzes the hydrolysis of nucleoside triphosphates to their monophosphate derivatives, with a high preference for the non-canonical purine nucleotides XTP (xanthosine triphosphate), dITP (deoxyinosine triphosphate) and ITP. Seems to function as a house-cleaning enzyme that removes non-canonical purine nucleotides from the nucleotide pool, thus preventing their incorporation into DNA/RNA and avoiding chromosomal lesions. In Bacillus anthracis, this protein is dITP/XTP pyrophosphatase.